Reading from the N-terminus, the 352-residue chain is Sphingosine 1-phosphate receptor 2 (352 aa).

Residues 1–34 (MGGLYSEYLNPEKVQEHYNYTKETLDMQETPSRK) lie on the Extracellular side of the membrane. A glycan (N-linked (GlcNAc...) asparagine) is linked at N19. A helical membrane pass occupies residues 35-59 (VASAFIIILCCAIVVENLLVLIAVA). Topologically, residues 60–66 (RNSKFHS) are cytoplasmic. A helical transmembrane segment spans residues 67–95 (AMYLFLGNLAASDLLAGVAFVANTLLSGP). The Extracellular portion of the chain corresponds to 96–109 (VTLSLTPLQWFARE). Residues 110–128 (GSAFITLSASVFSLLAIAI) form a helical membrane-spanning segment. The Cytoplasmic portion of the chain corresponds to 129-147 (ERQVAIAKVKLYGSDKSCR). Residues 148–173 (MLMLIGASWLISLILGGLPILGWNCL) form a helical membrane-spanning segment. The Extracellular portion of the chain corresponds to 174–189 (DHLEACSTVLPLYAKH). A helical transmembrane segment spans residues 190-210 (YVLCVVTIFSVILLAIVALYV). The Cytoplasmic portion of the chain corresponds to 211–233 (RIYFVVRSSHADVAGPQTLALLK). The chain crosses the membrane as a helical span at residues 234-255 (TVTIVLGVFIICWLPAFSILLL). Residues 256–271 (DSTCPVRACPVLYKAH) lie on the Extracellular side of the membrane. The helical transmembrane segment at 272–292 (YFFAFATLNSLLNPVIYTWRS) threads the bilayer. At 293–352 (RDLRREVLRPLLCWRQGKGATGRRGGNPGHRLLPLRSSSSLERGLHMPTSPTFLEGNTVV) the chain is on the cytoplasmic side. C305 is lipidated: S-palmitoyl cysteine.

This sequence belongs to the G-protein coupled receptor 1 family. As to expression, expressed in all developing tissues with highest levels detected in primitive, transformed cells. Relative abundance: lung &gt; kidney = skin = gut &gt; spleen &gt; brain &gt; liver.

It localises to the cell membrane. In terms of biological role, receptor for the lysosphingolipid sphingosine 1-phosphate (S1P). S1P is a bioactive lysophospholipid that elicits diverse physiological effects on most types of cells and tissues. Receptor for the chemokine-like protein FAM19A5. Mediates the inhibitory effect of FAM19A5 on vascular smooth muscle cell proliferation and migration. In lymphoid follicles, couples the binding of S1P to the activation of GNA13 and downstream inhibition of AKT activation leading to suppression of germinal center (GC) B cell growth and migration outside the GC niche. This chain is Sphingosine 1-phosphate receptor 2 (S1pr2), found in Rattus norvegicus (Rat).